A 316-amino-acid chain; its full sequence is MKPTVVSADVLFEDHRAALKWQWVAGLGASERRFDEVAVRAARSGADLVGYLNYIHPYRVQILGEREVAYLTNESPDDCARRISRIITLEPPVLVVADDQTAPDTLLSMCERAQLPMFATPESAAFVIDVLRAYLSKHFADRTSMHGVFMDILGMGVMITGESGLGKSELGLELISRGHGLVADDAVDLYRINQTTIEGRCPELLQNLLEVRGIGLLDIKAIFGETAVRRKMRLKMIVHLVRRETLERDYERIPYEPLTQDVLGIPVRKVIIQVEAGRNIAVLVEAAVRNAILQLRGINTYQEFVERHRKAMEQDD.

Residues His146 and Lys167 contribute to the active site. ATP is bound at residue 161–168 (GESGLGKS). Ser168 contacts Mg(2+). Asp185 functions as the Proton acceptor; for phosphorylation activity. Proton donor; for dephosphorylation activity in the catalytic mechanism. The interval 209-218 (LEVRGIGLLD) is important for the catalytic mechanism of both phosphorylation and dephosphorylation. Glu210 contributes to the Mg(2+) binding site. Arg252 is a catalytic residue. The important for the catalytic mechanism of dephosphorylation stretch occupies residues 273-278 (QVEAGR).

This sequence belongs to the HPrK/P family. As to quaternary structure, homohexamer. Mg(2+) serves as cofactor.

It carries out the reaction [HPr protein]-L-serine + ATP = [HPr protein]-O-phospho-L-serine + ADP + H(+). The catalysed reaction is [HPr protein]-O-phospho-L-serine + phosphate + H(+) = [HPr protein]-L-serine + diphosphate. Catalyzes the ATP- as well as the pyrophosphate-dependent phosphorylation of a specific serine residue in HPr, a phosphocarrier protein of the phosphoenolpyruvate-dependent sugar phosphotransferase system (PTS). HprK/P also catalyzes the pyrophosphate-producing, inorganic phosphate-dependent dephosphorylation (phosphorolysis) of seryl-phosphorylated HPr (P-Ser-HPr). The polypeptide is HPr kinase/phosphorylase (Polaromonas sp. (strain JS666 / ATCC BAA-500)).